Reading from the N-terminus, the 81-residue chain is Probable antimicrobial peptide Con13 (81 aa).

The N-terminal stretch at 1-22 is a signal peptide; it reads MNRKLLLVFLVVAMLVMQPAEA. A propeptide spanning residues 66–81 is cleaved from the precursor; the sequence is EAGQIPFDEFMDVLYS.

The protein belongs to the non-disulfide-bridged peptide (NDBP) superfamily. Long chain multifunctional peptide (group 2) family. Expressed by the venom gland.

It localises to the secreted. It is found in the target cell membrane. At high concentrations, acts as a pore former in cellular membranes and causes the leakage of the cells. At submicromolar concentrations, degranulates granulocytes and has a weak hemolytic activity against human erythrocytes. Also strongly inhibits the production of superoxide anions. Has a strong antibacterial activity against Gram-negative bacteria but is less active against Gram-positive bacteria. Also has antifungal activity. This chain is Probable antimicrobial peptide Con13, found in Opisthacanthus cayaporum (South American scorpion).